The chain runs to 411 residues: Putative ion-transport protein YfeO (411 aa).

The next 11 helical transmembrane spans lie at 9-29, 54-74, 99-119, 149-169, 186-206, 223-243, 258-278, 296-316, 322-342, 343-363, and 386-406; these read MLLLSLPALIIGVASSLVLIA, DSPFWIVGMLTLTGIVVGLII, ALPGLLLALIIGLAGGVSLGP, ILASAGTIGALFGTPVAAALI, LFAPLMAAAAGSLTTSLFFHP, IASGAIVAAIAIAAGMVAVWC, VLILGIGGFILGILGVIGGPL, LGAGDYFTLAVVKLAALVIAA, GGRIFPAVFIGAALGLMLHAH, VEAVPAAITVSCAILGLVLVV, and LLCIVMLPAWLLLAGKPLLAA.

Belongs to the chloride channel (TC 2.A.49) family.

It is found in the cell membrane. The sequence is that of Putative ion-transport protein YfeO from Salmonella paratyphi A (strain ATCC 9150 / SARB42).